A 531-amino-acid polypeptide reads, in one-letter code: Serine-type carboxypeptidase F (531 aa).

Residues 1 to 25 form the signal peptide; the sequence is MLFRSLLSTAVLAVSLCTDNASAAK. Asparagine 20 carries an N-linked (GlcNAc...) asparagine glycan. A propeptide spanning residues 26 to 52 is cleaved from the precursor; the sequence is HGRFGQKARDAMNIAKRSANAVKHSLK. N-linked (GlcNAc...) asparagine glycosylation is found at asparagine 63, asparagine 94, and asparagine 155. The active site involves serine 211. 4 N-linked (GlcNAc...) asparagine glycosylation sites follow: asparagine 228, asparagine 271, asparagine 309, and asparagine 378. Aspartate 430 is a catalytic residue. 2 N-linked (GlcNAc...) asparagine glycosylation sites follow: asparagine 436 and asparagine 444. The active site involves histidine 507.

This sequence belongs to the peptidase S10 family. In terms of assembly, monomer.

With respect to regulation, inhibited by DFP, and Hg(Cl)2. Its function is as follows. Removes any amino acid from the C-terminus of a long peptide. Digests preferentially peptides containing a positively charged residue in P1' position, as well as arginine, lysine or phenylalanine in P1 position of ester substrate. Also catalyzes peptide synthesis. This Aspergillus niger protein is Serine-type carboxypeptidase F (pepF).